The sequence spans 451 residues: Bifunctional protein GlmU (451 aa).

Positions 1 to 230 (MNNPIAAIVL…PADVGGINSR (230 aa)) are pyrophosphorylase. UDP-N-acetyl-alpha-D-glucosamine is bound by residues 10–13 (LAAG), lysine 24, glutamine 74, 79–80 (GT), 102–104 (YGD), glycine 142, glutamate 156, asparagine 171, and asparagine 228. Residue aspartate 104 coordinates Mg(2+). A Mg(2+)-binding site is contributed by asparagine 228. Positions 231 to 251 (AELAAAEAQWQAFRREEAMAA) are linker. The segment at 252 to 451 (GASLRAPETV…RKKKAAEQKK (200 aa)) is N-acetyltransferase. 2 residues coordinate UDP-N-acetyl-alpha-D-glucosamine: arginine 317 and lysine 335. Catalysis depends on histidine 347, which acts as the Proton acceptor. Residues tyrosine 350 and asparagine 361 each coordinate UDP-N-acetyl-alpha-D-glucosamine. Acetyl-CoA contacts are provided by residues alanine 364, 370-371 (NY), serine 389, alanine 407, and arginine 424.

The protein in the N-terminal section; belongs to the N-acetylglucosamine-1-phosphate uridyltransferase family. In the C-terminal section; belongs to the transferase hexapeptide repeat family. As to quaternary structure, homotrimer. Mg(2+) is required as a cofactor.

The protein resides in the cytoplasm. It catalyses the reaction alpha-D-glucosamine 1-phosphate + acetyl-CoA = N-acetyl-alpha-D-glucosamine 1-phosphate + CoA + H(+). The enzyme catalyses N-acetyl-alpha-D-glucosamine 1-phosphate + UTP + H(+) = UDP-N-acetyl-alpha-D-glucosamine + diphosphate. It participates in nucleotide-sugar biosynthesis; UDP-N-acetyl-alpha-D-glucosamine biosynthesis; N-acetyl-alpha-D-glucosamine 1-phosphate from alpha-D-glucosamine 6-phosphate (route II): step 2/2. It functions in the pathway nucleotide-sugar biosynthesis; UDP-N-acetyl-alpha-D-glucosamine biosynthesis; UDP-N-acetyl-alpha-D-glucosamine from N-acetyl-alpha-D-glucosamine 1-phosphate: step 1/1. Its pathway is bacterial outer membrane biogenesis; LPS lipid A biosynthesis. Functionally, catalyzes the last two sequential reactions in the de novo biosynthetic pathway for UDP-N-acetylglucosamine (UDP-GlcNAc). The C-terminal domain catalyzes the transfer of acetyl group from acetyl coenzyme A to glucosamine-1-phosphate (GlcN-1-P) to produce N-acetylglucosamine-1-phosphate (GlcNAc-1-P), which is converted into UDP-GlcNAc by the transfer of uridine 5-monophosphate (from uridine 5-triphosphate), a reaction catalyzed by the N-terminal domain. This chain is Bifunctional protein GlmU, found in Sphingopyxis alaskensis (strain DSM 13593 / LMG 18877 / RB2256) (Sphingomonas alaskensis).